Reading from the N-terminus, the 413-residue chain is MQQIQKVKAREIFNSRGWPTIEVEVTTSCGRVGCAIAPSGASKGVLEACELLDGDKARLSGRGVLRAVENVHTIIAPALMGKSVAAQAEIDSLLIQLDGTTNKSVLGANAIVAVSLAVAKANASVRGVPLCIVFHNLLTSEGDDFVYVPPVPMLNVINGGVHADNRLAIQEFMICPVGRRSFRESMEKAADVFHRLKGLLKQYGKSTNVGDEGGFAPDLSSTEETLGLLSEAIGDSKESVKIALDAASSTFYKDGKYSIDGKLLNVNEMVDFYAAIIEKYDIVSIEDPLYESDWESWQVMTRKLSDKIHIVGDDIFVTNPKIIKKGIKTGVANAVLVKINQVGTVTETIESIKLARKAGYKVVISHRSGETEDLSIAHLAVACGGAFLKAGSLSRSERVAKYNEVLRLEEVFV.

Q170 lines the (2R)-2-phosphoglycerate pocket. E212 functions as the Proton donor in the catalytic mechanism. Residues D245, E286, and D313 each coordinate Mg(2+). 4 residues coordinate (2R)-2-phosphoglycerate: K338, R367, S368, and K389. The active-site Proton acceptor is K338.

This sequence belongs to the enolase family. Mg(2+) serves as cofactor.

The protein localises to the cytoplasm. It localises to the secreted. It is found in the cell surface. It carries out the reaction (2R)-2-phosphoglycerate = phosphoenolpyruvate + H2O. It functions in the pathway carbohydrate degradation; glycolysis; pyruvate from D-glyceraldehyde 3-phosphate: step 4/5. In terms of biological role, catalyzes the reversible conversion of 2-phosphoglycerate (2-PG) into phosphoenolpyruvate (PEP). It is essential for the degradation of carbohydrates via glycolysis. In Neorickettsia sennetsu (strain ATCC VR-367 / Miyayama) (Ehrlichia sennetsu), this protein is Enolase.